Reading from the N-terminus, the 275-residue chain is Tryptophan synthase alpha chain (275 aa).

Catalysis depends on proton acceptor residues glutamate 58 and aspartate 69.

Belongs to the TrpA family. Tetramer of two alpha and two beta chains. In terms of tissue distribution, ubiquitously expressed at low levels in seedlings, roots, hypocotyls, cotyledons, stems, leaves, inflorescences, flowers, siliques and seeds.

It localises to the cytoplasm. The enzyme catalyses (1S,2R)-1-C-(indol-3-yl)glycerol 3-phosphate + L-serine = D-glyceraldehyde 3-phosphate + L-tryptophan + H2O. The catalysed reaction is (1S,2R)-1-C-(indol-3-yl)glycerol 3-phosphate = indole + D-glyceraldehyde 3-phosphate. It participates in amino-acid biosynthesis; L-tryptophan biosynthesis; L-tryptophan from chorismate: step 5/5. Its function is as follows. The alpha subunit is responsible for the aldol cleavage of indoleglycerol phosphate to indole and glyceraldehyde 3-phosphate. Contributes to the tryptophan-independent indole biosynthesis, and possibly to auxin production. This is Tryptophan synthase alpha chain (TRPA1) from Arabidopsis thaliana (Mouse-ear cress).